Consider the following 200-residue polypeptide: Small ribosomal subunit protein uS2 (200 aa).

This sequence belongs to the universal ribosomal protein uS2 family.

This chain is Small ribosomal subunit protein uS2, found in Picrophilus torridus (strain ATCC 700027 / DSM 9790 / JCM 10055 / NBRC 100828 / KAW 2/3).